Here is a 180-residue protein sequence, read N- to C-terminus: ATP-dependent protease subunit HslV (180 aa).

Thr5 is an active-site residue. Na(+) contacts are provided by Gly161, Cys164, and Thr167.

Belongs to the peptidase T1B family. HslV subfamily. A double ring-shaped homohexamer of HslV is capped on each side by a ring-shaped HslU homohexamer. The assembly of the HslU/HslV complex is dependent on binding of ATP.

It localises to the cytoplasm. It catalyses the reaction ATP-dependent cleavage of peptide bonds with broad specificity.. Allosterically activated by HslU binding. Its function is as follows. Protease subunit of a proteasome-like degradation complex believed to be a general protein degrading machinery. The polypeptide is ATP-dependent protease subunit HslV (Campylobacter fetus subsp. fetus (strain 82-40)).